The sequence spans 406 residues: MTSTKVEDRVTAAVLGAIGHALALTASMTWEILWALILGFALSAVVQAVVRRSTIVTLLGDDRPRTLVIATGLGAASSSCSYAAVALARSLFRKGANFTAAMAFEIGSTNLVVELGIILALLMGWQFTAAEFVGGPIMILVLAVLFRLFVGARLIDAAREQAERGLAGSMEGHAAMDMSIKREGSFWRRLLSPPGFTSIAHVFVMEWLAILRDLILGLLIAGAIAAWVPESFWQSFFLANHPAWSAVWGPIIGPIVAIVSFVCSIGNVPLAAVLWNGGISFGGVIAFIFADLLILPILNIYRKYYGARMMLVLLGTFYASMVVAGYLIELLFGTTNLIPSQRSATVMTAEISWNYTTWLNVIFLVIAAALVVRFITSGGLPMLRMMGGSPDAPHDHHDRHDDHLGH.

9 consecutive transmembrane segments (helical) span residues 30–50, 67–87, 111–131, 132–152, 208–228, 246–266, 278–298, 312–332, and 361–381; these read WEIL…QAVV, LVIA…AVAL, LVVE…TAAE, FVGG…FVGA, LAIL…AAWV, AVWG…CSIG, GISF…LPIL, VLLG…ELLF, and VIFL…GGLP.

Belongs to the UPF0718 family.

It is found in the cell membrane. This Mycobacterium tuberculosis (strain ATCC 25618 / H37Rv) protein is Putative permease Rv2963.